The sequence spans 458 residues: Tissue-resident T-cell transcription regulator protein ZNF683 (458 aa).

Disordered regions lie at residues 84–109 (PQDL…TDSE) and 249–275 (TLHS…APTR). C2H2-type zinc fingers lie at residues 301–323 (YECN…LRVH), 329–351 (FQCA…HLVH), and 357–379 (HQCQ…LRLH).

This sequence belongs to the krueppel C2H2-type zinc-finger protein family. In terms of tissue distribution, expressed in tissue-resident memory T (Trm) cell population in non-lymphoid organs, such as skin and gut. Expressed in innate lymphocytes, including tissue-resident natural killer (trNK) and natural killer T (NKT) cells in thymus, spleen and liver.

The protein resides in the nucleus. Transcription factor that mediates a transcriptional program in various innate and adaptive immune tissue-resident lymphocyte T-cell types such as tissue-resident memory T (Trm), natural killer (trNK) and natural killer T (NKT) cells and negatively regulates gene expression of proteins that promote the egress of tissue-resident T-cell populations from non-lymphoid organs. Plays a role in the development, retention and long-term establishment of adaptive and innate tissue-resident lymphocyte T-cell types in non-lymphoid organs, such as the skin and gut, but also in other nonbarrier tissues like liver and kidney, and therefore may provide immediate immunological protection against reactivating infections or viral reinfection. Also plays a role in the differentiation of both thymic and peripheral NKT cells. Negatively regulates the accumulation of interferon-gamma (IFN-gamma) in NKT cells at steady state or after antigenic stimulation. Positively regulates granzyme B production in NKT cells after innate stimulation. Associates with the transcriptional repressor PRDM1/BLIMP1 to chromatin at gene promoter regions. In Mus musculus (Mouse), this protein is Tissue-resident T-cell transcription regulator protein ZNF683.